The following is an 839-amino-acid chain: Mitochondrial escape protein 2 (839 aa).

The N-terminal 42 residues, 1 to 42 (MIQFSGRACLRQGWKCAAGVGLRCHGAHSSPPLHVPPFRRYT), are a transit peptide targeting the mitochondrion. Residues 43–297 (ATYSRADETG…IRGWIVSHPR (255 aa)) lie on the Mitochondrial matrix side of the membrane. In terms of domain architecture, RRM spans 190-282 (SRIKVEFLPT…TLLKLSYERK (93 aa)). Residues 298–318 (IVIPIIAAVIAAITVIVFDPI) traverse the membrane as a helical segment. Over 319-839 (RTFFIKIQIA…GLRRILQSKM (521 aa)) the chain is Mitochondrial intermembrane. A coiled-coil region spans residues 769-838 (LRTLGQQIAM…VGLRRILQSK (70 aa)).

This sequence belongs to the YME2 family.

The protein resides in the mitochondrion inner membrane. Functionally, plays a role in maintaining the mitochondrial genome and in controlling the mtDNA escape. Involved in the regulation of mtDNA nucleotide structure and number. May have a dispensable role in early maturation of pre-rRNA. This Coccidioides immitis (strain RS) (Valley fever fungus) protein is Mitochondrial escape protein 2 (YME2).